Consider the following 96-residue polypeptide: Small ribosomal subunit protein uS19 (96 aa).

Residues 1 to 30 (MARSIKKGPFADKHLTKKVEDANKGNKKSV) form a disordered region. Positions 9 to 24 (PFADKHLTKKVEDANK) are enriched in basic and acidic residues.

The protein belongs to the universal ribosomal protein uS19 family.

In terms of biological role, protein S19 forms a complex with S13 that binds strongly to the 16S ribosomal RNA. The polypeptide is Small ribosomal subunit protein uS19 (Anaeromyxobacter sp. (strain Fw109-5)).